Reading from the N-terminus, the 864-residue chain is Mitochondrial 15S rRNA processing factor CCM1 (864 aa).

Residues 1–76 constitute a mitochondrion transit peptide; the sequence is MYMARCGPKN…REFSNTLKER (76 aa). 2 PPR repeats span residues 319–353 and 356–390; these read NKQNLTTVIQFYSRKEMTKQAWNTFDTMKFLSTKH and DICTYNTMLRICEKERNFPKALDLFQEIQDHNIKP.

It belongs to the CCM1 family. In terms of assembly, binds to mitochondrial small subunit 15S rRNA.

Its subcellular location is the mitochondrion. In terms of biological role, regulates mitochondrial small subunit maturation by controlling 15S rRNA 5'-end processing. Localizes to the 5' precursor of the 15S rRNA in a position that is subsequently occupied by mS47 in the mature yeast mtSSU. Uses structure and sequence-specific RNA recognition, binding to a single-stranded region of the precursor and specifically recognizing bases -6 to -1. The exchange of Ccm1 for mS47 is coupled to the irreversible removal of precursor rRNA that is accompanied by conformational changes of the mitoribosomal proteins uS5m and mS26. These conformational changes signal completion of 5'-end rRNA processing through protection of the mature 5'-end of the 15S rRNA and stabilization of mS47. The removal of the 5' precursor together with the dissociation of Ccm1 may be catalyzed by the 5'-3' exoribonuclease Pet127. Involved in the specific removal of group I introns in mitochondrial encoded transcripts. The protein is Mitochondrial 15S rRNA processing factor CCM1 (CCM1) of Saccharomyces cerevisiae (strain YJM789) (Baker's yeast).